The primary structure comprises 86 residues: Small ribosomal subunit protein bS16 (86 aa).

The protein belongs to the bacterial ribosomal protein bS16 family.

This chain is Small ribosomal subunit protein bS16, found in Bordetella bronchiseptica (strain ATCC BAA-588 / NCTC 13252 / RB50) (Alcaligenes bronchisepticus).